Reading from the N-terminus, the 235-residue chain is Uridylate kinase (235 aa).

Position 9-12 (9-12) interacts with ATP; the sequence is KLSG. Position 51 (G51) interacts with UMP. Residues G52 and R56 each contribute to the ATP site. Residues D71 and 132 to 139 each bind UMP; that span reads TGNPYFTT. ATP-binding residues include T159, Y165, and D168.

This sequence belongs to the UMP kinase family. In terms of assembly, homohexamer.

The protein resides in the cytoplasm. The catalysed reaction is UMP + ATP = UDP + ADP. Its pathway is pyrimidine metabolism; CTP biosynthesis via de novo pathway; UDP from UMP (UMPK route): step 1/1. Inhibited by UTP. Its function is as follows. Catalyzes the reversible phosphorylation of UMP to UDP. The protein is Uridylate kinase of Cytophaga hutchinsonii (strain ATCC 33406 / DSM 1761 / CIP 103989 / NBRC 15051 / NCIMB 9469 / D465).